Consider the following 234-residue polypeptide: Zinc finger FYVE domain-containing protein 21 (234 aa).

An FYVE-type zinc finger spans residues aspartate 44 to leucine 104. Positions 50, 53, 66, 69, 74, 77, 96, and 99 each coordinate Zn(2+). The segment at alanine 107–glutamine 234 is PH-like.

As to quaternary structure, interacts with PTK2/FAK1.

The protein localises to the cell junction. Its subcellular location is the focal adhesion. The protein resides in the cytoplasmic vesicle. It localises to the endosome. In terms of biological role, plays a role in cell adhesion, and thereby in cell motility which requires repeated formation and disassembly of focal adhesions. Regulates microtubule-induced PTK2/FAK1 dephosphorylation, an event important for focal adhesion disassembly, as well as integrin beta-1/ITGB1 cell surface expression. The protein is Zinc finger FYVE domain-containing protein 21 (ZFYVE21) of Homo sapiens (Human).